A 166-amino-acid polypeptide reads, in one-letter code: Large ribosomal subunit protein uL10 (166 aa).

Belongs to the universal ribosomal protein uL10 family. In terms of assembly, part of the ribosomal stalk of the 50S ribosomal subunit. The N-terminus interacts with L11 and the large rRNA to form the base of the stalk. The C-terminus forms an elongated spine to which L12 dimers bind in a sequential fashion forming a multimeric L10(L12)X complex.

In terms of biological role, forms part of the ribosomal stalk, playing a central role in the interaction of the ribosome with GTP-bound translation factors. In Lactobacillus johnsonii (strain CNCM I-12250 / La1 / NCC 533), this protein is Large ribosomal subunit protein uL10.